Consider the following 366-residue polypeptide: DNA-directed RNA polymerase II subunit GRINL1A (366 aa).

Residues 1 to 23 form a disordered region; it reads MFSLPRGFEPPAPEDLGRQSSAE. Positions 15-39 form a coiled coil; it reads DLGRQSSAELRERLRRQERLLRNEK. Residues 29-68 are important for transcription repressor activity; that stretch reads RRQERLLRNEKFICKLPDKGKKISDTVAKLKAAISEREEV. Disordered stretches follow at residues 88–140, 158–182, 201–225, and 237–280; these read ATTR…HRGN, IRARAPSSEVKEHLPQHSVSSQEEE, ADQSEPSEENTSTENFPELQSETPK, and ARNP…RRAR. Residues 90-100 show a composition bias toward basic and acidic residues; it reads TRADTDVDKAQ. Low complexity predominate over residues 101 to 127; the sequence is SSDLMLDTSSLDPDCSSIDIKSSKSTS. Positions 225-296 are interaction with Pol II; that stretch reads KKPHYMKVLE…TAARLLPLHH (72 aa). Over residues 251–272 the composition is skewed to polar residues; the sequence is VLPTQQSDSPSHCQRGQSPASS. Phosphoserine is present on Ser-268. Positions 297 to 312 are important for transcription repressor activity; sequence LPAQLLSIEESLALQR. Residues 299–333 adopt a coiled-coil conformation; it reads AQLLSIEESLALQREQKQNYEEMQAKLAAQKLAER. The interaction with Pol II stretch occupies residues 313–338; the sequence is EQKQNYEEMQAKLAAQKLAERLNIKM. Residues 338 to 366 are disordered; the sequence is MQSYNPEGESSGRYREVRDEADAQSSDEC. Residues 347–358 show a composition bias toward basic and acidic residues; it reads SSGRYREVRDEA.

It belongs to the GRINL1 family. Component of the Pol II(G) complex, which contains the RNA polymerase II (Pol II) core complex subunits and POLR2M isoform 1. Pol II(G) appears to be an abundant form of Pol II. Dephosphorylated at Ser-268 by the PNUTS-PP1 complex, promoting RNA polymerase II transcription pause-release.

It localises to the nucleus. Functionally, appears to be a stable component of the Pol II(G) complex form of RNA polymerase II (Pol II). Pol II synthesizes mRNA precursors and many functional non-coding RNAs and is the central component of the basal RNA polymerase II transcription machinery. May play a role in the Mediator complex-dependent regulation of transcription activation. Acts as a negative regulator of transcriptional activation; this repression is relieved by the Mediator complex, which restores Pol II(G) activator-dependent transcription to a level equivalent to that of Pol II. The polypeptide is DNA-directed RNA polymerase II subunit GRINL1A (Polr2m) (Mus musculus (Mouse)).